Reading from the N-terminus, the 518-residue chain is Ribonuclease Y (518 aa).

The helical transmembrane segment at 2–22 threads the bilayer; it reads VLNILLAIVGLIVGLGLGFVI. The interval 91 to 119 is disordered; it reads QREQTLDRKDDSLEKREGSLEEKEEKLGA. The KH domain occupies 208–268; sequence TVSVVTLPND…IRREIARMTL (61 aa). The 94-residue stretch at 334 to 427 folds into the HD domain; that stretch reads VLNHSIEVAK…VAAADALSAA (94 aa).

The protein belongs to the RNase Y family.

The protein resides in the cell membrane. In terms of biological role, endoribonuclease that initiates mRNA decay. The polypeptide is Ribonuclease Y (Enterococcus faecalis (strain ATCC 700802 / V583)).